The primary structure comprises 870 residues: NEDD4-like E3 ubiquitin-protein ligase WWP2 (870 aa).

Residues 1–117 (MASASSSRAG…KNNGGKMENT (117 aa)) form the C2 domain. A disordered region spans residues 150 to 300 (SVPNGSAVTD…QLPAAAQAPD (151 aa)). Positions 152–171 (PNGSAVTDGSQPPSRESSGT) are enriched in polar residues. Residues 198 to 208 (GGSARTATAAS) are compositionally biased toward low complexity. S211 carries the post-translational modification Phosphoserine. Polar residues-rich tracts occupy residues 222 to 235 (VKNS…NGTV) and 262 to 289 (SVSS…TSGT). Residues 290–300 (QQLPAAAQAPD) show a composition bias toward low complexity. 4 WW domains span residues 300-333 (DALP…RPLP), 330-363 (RPLP…RPTA), 405-437 (GPLP…DPRT), and 444-477 (PALP…DPRP). The HECT domain occupies 536-870 (KPYDLRRRLY…IEETEGFGQE (335 aa)). The active-site Glycyl thioester intermediate is C838.

Interacts with SCNN1A, SCNN1B, SCNN1G, WBP1, WBP2 and ATN1. Interacts with ERBB4, NDFIP1 and NDFIP2. Interacts with ARRDC4. Interacts with POU5F1, RBP1, EGR2 and SLC11A2. Interacts (via WW domains) with ARRDC1 (via PPxY motifs); ubiquitinates ARRDC1. Interacts (via WW domains) with ARRDC2 and ARRDC3. Autoubiquitinated. Ubiquitinated by the SCF(FBXL15) complex, leading to its degradation by the proteasome.

Its subcellular location is the nucleus. It catalyses the reaction S-ubiquitinyl-[E2 ubiquitin-conjugating enzyme]-L-cysteine + [acceptor protein]-L-lysine = [E2 ubiquitin-conjugating enzyme]-L-cysteine + N(6)-ubiquitinyl-[acceptor protein]-L-lysine.. Its pathway is protein modification; protein ubiquitination. Activated by NDFIP1- and NDFIP2-binding. E3 ubiquitin-protein ligase which accepts ubiquitin from an E2 ubiquitin-conjugating enzyme in the form of a thioester and then directly transfers the ubiquitin to targeted substrates. Polyubiquitinates POU5F1 by 'Lys-63'-linked conjugation and promotes it to proteasomal degradation; regulates POU5F1 protein level during differentiation of embryonal carcinoma cells (ECCs) but not in undifferentiated ECCs and embryonic stem cells (ESCs). Ubiquitinates EGR2 and promotes it to proteasomal degradation; in T-cells the ubiquitination inhibits activation-induced cell death. Ubiquitinates SLC11A2; the ubiquitination is enhanced by presence of NDFIP1 and NDFIP2. Ubiquitinates RPB1 and promotes it to proteasomal degradation. The sequence is that of NEDD4-like E3 ubiquitin-protein ligase WWP2 (Wwp2) from Mus musculus (Mouse).